The primary structure comprises 218 residues: PKHD-type hydroxylase Sala_1910 (218 aa).

The region spanning 74 to 172 is the Fe2OG dioxygenase domain; it reads RIAPPLLTRY…RLVAITFIQS (99 aa). Fe cation-binding residues include histidine 92, aspartate 94, and histidine 153. Arginine 163 contributes to the 2-oxoglutarate binding site.

The cofactor is Fe(2+). L-ascorbate serves as cofactor.

This Sphingopyxis alaskensis (strain DSM 13593 / LMG 18877 / RB2256) (Sphingomonas alaskensis) protein is PKHD-type hydroxylase Sala_1910.